The chain runs to 180 residues: ATP synthase subunit delta (180 aa).

The protein belongs to the ATPase delta chain family. F-type ATPases have 2 components, F(1) - the catalytic core - and F(0) - the membrane proton channel. F(1) has five subunits: alpha(3), beta(3), gamma(1), delta(1), epsilon(1). F(0) has three main subunits: a(1), b(2) and c(10-14). The alpha and beta chains form an alternating ring which encloses part of the gamma chain. F(1) is attached to F(0) by a central stalk formed by the gamma and epsilon chains, while a peripheral stalk is formed by the delta and b chains.

The protein resides in the cell membrane. Its function is as follows. F(1)F(0) ATP synthase produces ATP from ADP in the presence of a proton or sodium gradient. F-type ATPases consist of two structural domains, F(1) containing the extramembraneous catalytic core and F(0) containing the membrane proton channel, linked together by a central stalk and a peripheral stalk. During catalysis, ATP synthesis in the catalytic domain of F(1) is coupled via a rotary mechanism of the central stalk subunits to proton translocation. Functionally, this protein is part of the stalk that links CF(0) to CF(1). It either transmits conformational changes from CF(0) to CF(1) or is implicated in proton conduction. The sequence is that of ATP synthase subunit delta from Caldicellulosiruptor bescii (strain ATCC BAA-1888 / DSM 6725 / KCTC 15123 / Z-1320) (Anaerocellum thermophilum).